Consider the following 89-residue polypeptide: Large ribosomal subunit protein bL27 (89 aa).

A disordered region spans residues 1 to 24 (MAHKKGTGSTRNGRDSRSQRLGVK).

Belongs to the bacterial ribosomal protein bL27 family.

This chain is Large ribosomal subunit protein bL27, found in Microcystis aeruginosa (strain NIES-843 / IAM M-2473).